The sequence spans 378 residues: Putative odorant receptor 71a (378 aa).

The Cytoplasmic segment spans residues 1 to 37 (MDYDRIRPVRFLTGVLKWWRLWPRKESVSTPDWTNWQ). A helical membrane pass occupies residues 38 to 58 (AYALHVPFTFLFVLLLWLEAI). At 59–66 (KSRDIQHT) the chain is on the extracellular side. A helical membrane pass occupies residues 67-87 (ADVLLICLTTTALGGKVINIW). Topologically, residues 88-127 (KYAHVAQGILSEWSTWDLFELRSKQEVDMWRFEHRRFNRV) are cytoplasmic. The chain crosses the membrane as a helical span at residues 128 to 148 (FMFYCLCSAGVIPFIVIQPLF). At 149-166 (DIPNRLPFWMWTPFDWQQ) the chain is on the extracellular side. Residues 167-187 (PVLFWYAFIYQATTIPIACAC) form a helical membrane-spanning segment. Residues 188–255 (NVTMDAVNWY…IFISKSTFTQ (68 aa)) are Cytoplasmic-facing. Residues 256–276 (ILVSSLIICFTIYSMQMSPVL) form a helical membrane-spanning segment. Residues 277 to 280 (QDLP) lie on the Extracellular side of the membrane. The helical transmembrane segment at 281–301 (GFAAMMQYLVAMIMQVMLPTI) threads the bilayer. Residues 302 to 343 (YGNAVIDSANMLTDSMYNSDWPDMNCRMRRLVLMFMVYLNRP) are Cytoplasmic-facing. A helical membrane pass occupies residues 344 to 364 (VTLKAGGFFHIGLPLFTKTMN). Residues 365 to 378 (QAYSLLALLLNMNQ) lie on the Extracellular side of the membrane.

It belongs to the insect chemoreceptor superfamily. Heteromeric odorant receptor channel (TC 1.A.69) family. Or2a subfamily. As to quaternary structure, interacts with Orco. Complexes exist early in the endomembrane system in olfactory sensory neurons (OSNs), coupling these complexes to the conserved ciliary trafficking pathway. As to expression, expressed in olfactory sensory neurons in the maxillary palp.

Its subcellular location is the cell membrane. In terms of biological role, odorant receptor which mediates acceptance or avoidance behavior, depending on its substrates. The odorant receptor repertoire encodes a large collection of odor stimuli that vary widely in identity, intensity, and duration. May form a complex with Orco to form odorant-sensing units, providing sensitive and prolonged odorant signaling and calcium permeability. The chain is Putative odorant receptor 71a (Or71a) from Drosophila melanogaster (Fruit fly).